The primary structure comprises 592 residues: Arginine--tRNA ligase (592 aa).

Residues 131–141 (ANPTGPMHVGH) carry the 'HIGH' region motif.

Belongs to the class-I aminoacyl-tRNA synthetase family. Monomer.

It localises to the cytoplasm. The catalysed reaction is tRNA(Arg) + L-arginine + ATP = L-arginyl-tRNA(Arg) + AMP + diphosphate. This is Arginine--tRNA ligase from Rhodospirillum rubrum (strain ATCC 11170 / ATH 1.1.1 / DSM 467 / LMG 4362 / NCIMB 8255 / S1).